The primary structure comprises 310 residues: MASNNPHDNLSDQTPSDDFFEQILGLPNFSASSAAGLSGVDGGLGGGAPPMMLQLGSGEEGSHMGGLGGSGPTGFHNQMFPLGLSLDQGKGPGFLRPEGGHGSGKRFSDDVVDNRCSSMKPVFHGQPMQQPPPSAPHQPTSIRPRVRARRGQATDPHSIAERLRRERIAERIRALQELVPTVNKTDRAAMIDEIVDYVKFLRLQVKVLSMSRLGGAGAVAPLVTDMPLSSSVEDETGEGGRTPQPAWEKWSNDGTERQVAKLMEENVGAAMQLLQSKALCMMPISLAMAIYHSQPPDTSSVVKPENNPPQ.

Disordered stretches follow at residues 124–156 and 229–253; these read HGQP…ATDP and SSSV…WSND. The 50-residue stretch at 152–201 folds into the bHLH domain; sequence QATDPHSIAERLRRERIAERIRALQELVPTVNKTDRAAMIDEIVDYVKFL.

Homodimer. As to expression, expressed constitutively in roots, leaves, stems, and flowers.

It localises to the nucleus. In terms of biological role, required for ovule fertilization. The protein is Transcription factor UNE12 (UNE12) of Arabidopsis thaliana (Mouse-ear cress).